Here is a 378-residue protein sequence, read N- to C-terminus: 4-hydroxy-3-methylbut-2-en-1-yl diphosphate synthase (flavodoxin) (378 aa).

4 residues coordinate [4Fe-4S] cluster: cysteine 268, cysteine 271, cysteine 303, and glutamate 310.

Belongs to the IspG family. [4Fe-4S] cluster is required as a cofactor.

It carries out the reaction (2E)-4-hydroxy-3-methylbut-2-enyl diphosphate + oxidized [flavodoxin] + H2O + 2 H(+) = 2-C-methyl-D-erythritol 2,4-cyclic diphosphate + reduced [flavodoxin]. Its pathway is isoprenoid biosynthesis; isopentenyl diphosphate biosynthesis via DXP pathway; isopentenyl diphosphate from 1-deoxy-D-xylulose 5-phosphate: step 5/6. Functionally, converts 2C-methyl-D-erythritol 2,4-cyclodiphosphate (ME-2,4cPP) into 1-hydroxy-2-methyl-2-(E)-butenyl 4-diphosphate. The chain is 4-hydroxy-3-methylbut-2-en-1-yl diphosphate synthase (flavodoxin) from Corynebacterium efficiens (strain DSM 44549 / YS-314 / AJ 12310 / JCM 11189 / NBRC 100395).